Consider the following 396-residue polypeptide: 1-deoxy-D-xylulose 5-phosphate reductoisomerase (396 aa).

Residues Thr-10, Gly-11, Ser-12, Ile-13, Asn-38, and Asn-123 each contribute to the NADPH site. Residue Lys-124 coordinates 1-deoxy-D-xylulose 5-phosphate. Glu-125 lines the NADPH pocket. Asp-149 contacts Mn(2+). Positions 150, 151, 185, and 208 each coordinate 1-deoxy-D-xylulose 5-phosphate. Glu-151 provides a ligand contact to Mn(2+). Gly-214 is an NADPH binding site. Positions 221, 226, 227, and 230 each coordinate 1-deoxy-D-xylulose 5-phosphate. Glu-230 contributes to the Mn(2+) binding site.

It belongs to the DXR family. Requires Mg(2+) as cofactor. The cofactor is Mn(2+).

The catalysed reaction is 2-C-methyl-D-erythritol 4-phosphate + NADP(+) = 1-deoxy-D-xylulose 5-phosphate + NADPH + H(+). It functions in the pathway isoprenoid biosynthesis; isopentenyl diphosphate biosynthesis via DXP pathway; isopentenyl diphosphate from 1-deoxy-D-xylulose 5-phosphate: step 1/6. Functionally, catalyzes the NADPH-dependent rearrangement and reduction of 1-deoxy-D-xylulose-5-phosphate (DXP) to 2-C-methyl-D-erythritol 4-phosphate (MEP). The polypeptide is 1-deoxy-D-xylulose 5-phosphate reductoisomerase (Shewanella pealeana (strain ATCC 700345 / ANG-SQ1)).